The following is a 724-amino-acid chain: MDENKTKPAGKCPVMHGGNTATGSSNTDWWPNALNLDILHQHDTKTNPLGSDFSYRDALKTLDVDALKKDLHALMTDSQEWWPADWGHYGGLMIRMAWHSAGTYRTADGRGGGGTGNQRFAPLNSWPDNVSLDKARRLLWPIKKKYGNKLSWADLIILAGNIAYESMGLKTFGFAFGREDIWHPEKDIYWGSEKEWLAKSTGRYGSDDRTTLENPLAAVQMGLIYVNPEGVDGNPDPLRTAQDMRVTFSRMAMNDEETVALTAGGHTVGKTHGNGDASLLGKAPEGTDVGEQGLGWHNPTGSGKGRYTVTSGLEGAWTTHPTQWDNGFFHMLLNHEWELKKSPAGAWQWEPVFIKEEDKPVDVEDPSIRYNPMMTDADMALKVDPEYRKISERFYQDQAYFSEVFARAWFKLTHRDMGPKTRYLGPDVPQEDLLWQDPVPAGRTDYDVDVVKARIAESSLSISELVATAWDSARTFRGSDMRGGANGARIRLAPQKDWVGNEPERLARVLVVLENIAAATGASVADTIVLAGNVGIEKAAKAAGVNITVPFAPGRGDTTDALTDVESFDVLEPIHDGYRNWLKKDYAVSPEELMLDRTQLMGLTAKEMTVLVGGLRVLGTNYGGTKHGVFTDREGALTNDFFANLTDMKYTWKPYRKDLYEIRDRKTGEVKWTATRLDLVFGSNSILRSYAEVYAQDDNKEKFVNDFVAAWVKVMNADRFDLAE.

The tract at residues 1–20 (MDENKTKPAGKCPVMHGGNT) is disordered. The segment at residues 98-225 (WHSAGTYRTA…LAAVQMGLIY (128 aa)) is a cross-link (tryptophyl-tyrosyl-methioninium (Trp-Tyr) (with M-251)). The Proton acceptor role is filled by His99. Positions 225 to 251 (YVNPEGVDGNPDPLRTAQDMRVTFSRM) form a cross-link, tryptophyl-tyrosyl-methioninium (Tyr-Met) (with W-98). His266 provides a ligand contact to heme b.

This sequence belongs to the peroxidase family. Peroxidase/catalase subfamily. In terms of assembly, homodimer or homotetramer. It depends on heme b as a cofactor. Formation of the three residue Trp-Tyr-Met cross-link is important for the catalase, but not the peroxidase activity of the enzyme.

It carries out the reaction H2O2 + AH2 = A + 2 H2O. The enzyme catalyses 2 H2O2 = O2 + 2 H2O. In terms of biological role, bifunctional enzyme with both catalase and broad-spectrum peroxidase activity. The chain is Catalase-peroxidase from Pectobacterium carotovorum subsp. carotovorum (strain PC1).